The following is a 314-amino-acid chain: Serine protease 46 (314 aa).

One can recognise a Peptidase S1 domain in the interval 44–281 (VVNGKVVEVG…FTQWIKRQIG (238 aa)). C69 and C85 are oxidised to a cystine. Catalysis depends on charge relay system residues H84 and D130. 3 disulfides stabilise this stretch: C164–C239, C197–C219, and C229–C257. Catalysis depends on S233, which acts as the Charge relay system. Residues 293–313 (FLSPFILTGYILLVSLGSLWL) form a helical membrane-spanning segment.

Belongs to the peptidase S1 family.

The protein localises to the membrane. This Rattus norvegicus (Rat) protein is Serine protease 46 (Prss46).